A 220-amino-acid polypeptide reads, in one-letter code: Response regulator ArlR (220 aa).

A Response regulatory domain is found at 3-116 (KILIVEDEQN…ELLARIRAML (114 aa)). Position 52 is a 4-aspartylphosphate (aspartate 52). The segment at residues 122–220 (KNLIDIKGII…VRGVGYVVRQ (99 aa)) is a DNA-binding region (ompR/PhoB-type).

Post-translationally, phosphorylated by ArlS.

It localises to the cytoplasm. Its function is as follows. Member of the two-component regulatory system ArlS/ArlR. This Staphylococcus saprophyticus subsp. saprophyticus (strain ATCC 15305 / DSM 20229 / NCIMB 8711 / NCTC 7292 / S-41) protein is Response regulator ArlR (arlR).